A 194-amino-acid chain; its full sequence is Ras-related protein Rab-22A (194 aa).

Residue 12-20 coordinates GTP; sequence GDTGVGKSS. The Effector region motif lies at 34 to 42; sequence INPTIGASF. GTP is bound by residues 60-64, 118-121, and 148-150; these read DTAGQ, NKCD, and SAK. A disordered region spans residues 174 to 194; sequence PSGGKGFKLRRQPSEPKRSCC. Residues 185-194 show a composition bias toward basic and acidic residues; that stretch reads QPSEPKRSCC. 2 S-geranylgeranyl cysteine lipidation sites follow: cysteine 193 and cysteine 194.

It belongs to the small GTPase superfamily. Rab family. As to quaternary structure, interacts directly with ZFYVE20. Binds EEA1. Interacts (in its GTP-bound form) with RABGEF1. Interacts (in its GTP-bound form) with RINL.

Its subcellular location is the endosome membrane. It is found in the cell membrane. It localises to the early endosome. The protein localises to the late endosome. The protein resides in the cell projection. Its subcellular location is the ruffle. It is found in the cytoplasmic vesicle. It localises to the phagosome. The protein localises to the phagosome membrane. In terms of biological role, plays a role in endocytosis and intracellular protein transport. Mediates trafficking of TF from early endosomes to recycling endosomes. Required for NGF-mediated endocytosis of NTRK1, and subsequent neurite outgrowth. Binds GTP and GDP and has low GTPase activity. Alternates between a GTP-bound active form and a GDP-bound inactive form. In Homo sapiens (Human), this protein is Ras-related protein Rab-22A (RAB22A).